The primary structure comprises 534 residues: Cytochrome P450 monooxygenase CYP4 (534 aa).

The helical transmembrane segment at 46–66 threads the bilayer; it reads TIIFCVLMSLVGYIVSRIIWG. Asn220 carries N-linked (GlcNAc...) asparagine glycosylation. Cys477 lines the heme pocket. N-linked (GlcNAc...) asparagine glycosylation occurs at Asn515.

This sequence belongs to the cytochrome P450 family. The cofactor is heme.

The protein localises to the membrane. Its pathway is secondary metabolite biosynthesis. In terms of biological role, cytochrome P450 monooxygenase; part of the gene cluster that mediates the biosynthesis of a tyrosine-derived cytochalasan acting as a fungal signal recognized by resistant rice plants and leads to avirulence in Pi33 resistant rice cultivars. The first step in the pathway is catalyzed by the hybrid PKS-NRPS ACE1, assisted by the enoyl reductase RAP1, that are responsible for fusion of the tyrosine precursor and the polyketide backbone. The polyketide synthase module (PKS) of ACE1 is responsible for the synthesis of the polyketide backbone and the downstream nonribosomal peptide synthetase (NRPS) amidates the carboxyl end of the polyketide with the tyrosine precursor. Because ACE1 lacks a designated enoylreductase (ER) domain, the required activity is provided the enoyl reductase RAP1. Reduction by the hydrolyase ORFZ, followed by dehydration and intra-molecular Diels-Alder cyclization by the Diels-Alderase ORF3 then yield the required isoindolone-fused macrocycle. A number of oxidative steps catalyzed by the tailoring enzymes identified within the cluster, including cytochrome P450 monooxygenases CYP1 to CYP4, the FAD-linked oxidoreductase OXR2 and the short-chain dehydrogenase/reductase OXR1, are further required to afford the final cytochalasans that confer avirulence and which have still to be identified. The monooxygenase CYP1 has been shown to be a site-selective C-18 hydroxylase whereas the function of CYP3 is the site-selective epoxidation of the C-6/C-7 olefin that is present in some intermediate compounds. Finally, SYN2 and RAP2 are not required for avirulence in Pi33 resistant rice cultivars. The protein is Cytochrome P450 monooxygenase CYP4 of Pyricularia oryzae (strain 70-15 / ATCC MYA-4617 / FGSC 8958) (Rice blast fungus).